The chain runs to 132 residues: L-ectoine synthase (132 aa).

Belongs to the ectoine synthase family.

The catalysed reaction is (2S)-4-acetamido-2-aminobutanoate = L-ectoine + H2O. It participates in amine and polyamine biosynthesis; ectoine biosynthesis; L-ectoine from L-aspartate 4-semialdehyde: step 3/3. Its function is as follows. Catalyzes the circularization of gamma-N-acetyl-alpha,gamma-diaminobutyric acid (ADABA) to ectoine (1,4,5,6-tetrahydro-2-methyl-4-pyrimidine carboxylic acid), which is an excellent osmoprotectant. The polypeptide is L-ectoine synthase (Saccharophagus degradans (strain 2-40 / ATCC 43961 / DSM 17024)).